The sequence spans 286 residues: MATPREIKKRINSVKNTRKITRTMEMVSTAKSKKISDRVNASHPFSNKIKELVSSLASLSGVVHSPYLRRPEKIKTVALLVITANRGLCGGYNSNVNRLAKAKVAEWKKAGVNVRLFIVGKKGISFFKFAGEKAEKTYTHLDDKSGYKEAEEFANLFLELFANEEVDAVEIASTVYYSSASQKPEVTRILPFEPAKEGNGNDLVVYEPSPERVLESLLPLVVKTAFLKAILEANCSEQIARRIAMKSATDAASEMIKLLTRGYNRVRQAKITQEISEIVAGADSLN.

It belongs to the ATPase gamma chain family. In terms of assembly, F-type ATPases have 2 components, CF(1) - the catalytic core - and CF(0) - the membrane proton channel. CF(1) has five subunits: alpha(3), beta(3), gamma(1), delta(1), epsilon(1). CF(0) has three main subunits: a, b and c.

Its subcellular location is the cell inner membrane. Produces ATP from ADP in the presence of a proton gradient across the membrane. The gamma chain is believed to be important in regulating ATPase activity and the flow of protons through the CF(0) complex. This Leptospira borgpetersenii serovar Hardjo-bovis (strain JB197) protein is ATP synthase gamma chain.